The sequence spans 149 residues: Large ribosomal subunit protein bL9 (149 aa).

At K89 the chain carries N6-acetyllysine.

The protein belongs to the bacterial ribosomal protein bL9 family.

Functionally, binds to the 23S rRNA. This is Large ribosomal subunit protein bL9 from Shigella boydii serotype 18 (strain CDC 3083-94 / BS512).